Here is a 285-residue protein sequence, read N- to C-terminus: uncharacterized protein (285 aa).

Residues 92–199 (TLLLADVEES…PTINRTARLR (108 aa)) form the Guanylate cyclase domain.

The protein belongs to the adenylyl cyclase class-4/guanylyl cyclase family.

This is an uncharacterized protein from Mycobacterium tuberculosis (strain CDC 1551 / Oshkosh).